A 498-amino-acid chain; its full sequence is ATP synthase subunit beta, chloroplastic (498 aa).

ATP is bound at residue 172–179; sequence GGAGVGKT.

It belongs to the ATPase alpha/beta chains family. In terms of assembly, F-type ATPases have 2 components, CF(1) - the catalytic core - and CF(0) - the membrane proton channel. CF(1) has five subunits: alpha(3), beta(3), gamma(1), delta(1), epsilon(1). CF(0) has four main subunits: a(1), b(1), b'(1) and c(9-12).

It is found in the plastid. Its subcellular location is the chloroplast thylakoid membrane. It catalyses the reaction ATP + H2O + 4 H(+)(in) = ADP + phosphate + 5 H(+)(out). Its function is as follows. Produces ATP from ADP in the presence of a proton gradient across the membrane. The catalytic sites are hosted primarily by the beta subunits. This is ATP synthase subunit beta, chloroplastic from Asarum canadense (Wild ginger).